The following is a 520-amino-acid chain: Anthranilate synthase component 1 (520 aa).

L-tryptophan contacts are provided by residues Ser40 and 291-293 (PYM). 328 to 329 (GT) contacts chorismate. Residue Glu361 participates in Mg(2+) binding. Chorismate contacts are provided by residues Tyr449, Arg469, 483–485 (GAG), and Gly485. Glu498 lines the Mg(2+) pocket.

The protein belongs to the anthranilate synthase component I family. As to quaternary structure, heterotetramer consisting of two non-identical subunits: a beta subunit (TrpG) and a large lpha subunit (TrpE). Requires Mg(2+) as cofactor.

The catalysed reaction is chorismate + L-glutamine = anthranilate + pyruvate + L-glutamate + H(+). It functions in the pathway amino-acid biosynthesis; L-tryptophan biosynthesis; L-tryptophan from chorismate: step 1/5. Cooperatively feedback inhibited by tryptophan. Functionally, part of a heterotetrameric complex that catalyzes the two-step biosynthesis of anthranilate, an intermediate in the biosynthesis of L-tryptophan. In the first step, the glutamine-binding beta subunit (TrpG) of anthranilate synthase (AS) provides the glutamine amidotransferase activity which generates ammonia as a substrate that, along with chorismate, is used in the second step, catalyzed by the large alpha subunit of AS (TrpE) to produce anthranilate. In the absence of TrpG, TrpE can synthesize anthranilate directly from chorismate and high concentrations of ammonia. The sequence is that of Anthranilate synthase component 1 (trpE) from Escherichia coli (strain K12).